A 378-amino-acid chain; its full sequence is Putative F-box protein At5g51000 (378 aa).

The F-box domain maps to 1–47; the sequence is MSTMSDLFPDLVEEILSRVPITSLKAVKLTCKQWNDLSKDSSFTKNH.

The chain is Putative F-box protein At5g51000 from Arabidopsis thaliana (Mouse-ear cress).